Reading from the N-terminus, the 332-residue chain is tRNA-dihydrouridine synthase B (332 aa).

FMN contacts are provided by residues 16 to 18 (PMA) and Q70. C100 acts as the Proton donor in catalysis. FMN-binding positions include K139, 200 to 202 (NGD), and 224 to 225 (GR).

This sequence belongs to the Dus family. DusB subfamily. FMN serves as cofactor.

It carries out the reaction a 5,6-dihydrouridine in tRNA + NAD(+) = a uridine in tRNA + NADH + H(+). The enzyme catalyses a 5,6-dihydrouridine in tRNA + NADP(+) = a uridine in tRNA + NADPH + H(+). Its function is as follows. Catalyzes the synthesis of 5,6-dihydrouridine (D), a modified base found in the D-loop of most tRNAs, via the reduction of the C5-C6 double bond in target uridines. The chain is tRNA-dihydrouridine synthase B from Pasteurella multocida (strain Pm70).